The chain runs to 122 residues: Acidic phospholipase A2 homolog vipoxin A chain (122 aa).

Cystine bridges form between Cys26-Cys115, Cys28-Cys44, Cys43-Cys95, Cys49-Cys122, Cys50-Cys88, Cys57-Cys81, and Cys75-Cys86.

The protein belongs to the phospholipase A2 family. Group II subfamily. D49 sub-subfamily. Heterodimer of A and B (AC P14420) chains; non-covalently linked. The A chain (acidic) is non-toxic, and increases the toxicity of the B chain (basic). The A chain may act as factor stabilizing the complex structure and hence retaining its toxicity by preventing non-specific binding. Upon binding to the target membranes the A chain may dissociate. In terms of tissue distribution, expressed by the venom gland.

Its subcellular location is the secreted. In terms of biological role, heterodimer: postsynaptic neurotoxin. Its function is as follows. Monomer: Acidic phospholipase A2 homolog that is non-toxic. The chain is Acidic phospholipase A2 homolog vipoxin A chain from Vipera ammodytes meridionalis (Eastern sand viper).